Consider the following 302-residue polypeptide: Sulfate adenylyltransferase subunit 2 (302 aa).

The disordered stretch occupies residues 280-302 (RQGRAIDHDQSGSMELKKRQGYF).

Belongs to the PAPS reductase family. CysD subfamily. Heterodimer composed of CysD, the smaller subunit, and CysN.

It carries out the reaction sulfate + ATP + H(+) = adenosine 5'-phosphosulfate + diphosphate. It participates in sulfur metabolism; hydrogen sulfide biosynthesis; sulfite from sulfate: step 1/3. With CysN forms the ATP sulfurylase (ATPS) that catalyzes the adenylation of sulfate producing adenosine 5'-phosphosulfate (APS) and diphosphate, the first enzymatic step in sulfur assimilation pathway. APS synthesis involves the formation of a high-energy phosphoric-sulfuric acid anhydride bond driven by GTP hydrolysis by CysN coupled to ATP hydrolysis by CysD. This chain is Sulfate adenylyltransferase subunit 2, found in Vibrio parahaemolyticus serotype O3:K6 (strain RIMD 2210633).